We begin with the raw amino-acid sequence, 196 residues long: Regulator of G-protein signaling 8 (196 aa).

The residue at position 26 (Ser26) is a Phosphoserine. The region spanning 72–188 is the RGS domain; the sequence is SFDVLLSHKY…LRSKMYLDLL (117 aa).

Interacts with GNAO1 and GNAI3.

Its subcellular location is the cell membrane. It localises to the membrane. The protein resides in the perikaryon. It is found in the cell projection. The protein localises to the dendrite. Its subcellular location is the nucleus. Regulates G protein-coupled receptor signaling cascades, including signaling via muscarinic acetylcholine receptor CHRM2 and dopamine receptor DRD2. Inhibits signal transduction by increasing the GTPase activity of G protein alpha subunits, thereby driving them into their inactive GDP-bound form. Modulates the activity of potassium channels that are activated in response to DRD2 and CHRM2 signaling. The sequence is that of Regulator of G-protein signaling 8 (RGS8) from Macaca fascicularis (Crab-eating macaque).